A 556-amino-acid chain; its full sequence is MLRSSAITQGIQRSPNRAMLRAVGFNDNDFNKPIIGIANGYSTITPCNVGLNNLALHAEASTKVSGAMPQMFGTITVSDGISMGTEGMKYSLVSREVIADSIETACNAQSMDGVLAIGGCDKNMPGAMIAMARMNIPAIFVYGGTIKPGKLDGCDLTVVSAFEAVGQLTSGKITEDKLIAVEKNCIPGAGSCGGMFTANTMSAAIETLGLSLPYSSTMAAEDKEKIESAERSAKVLVDAIEKNIRPLDLLTKKSFENAIAVVMAVGGSTNAVLHLLAIARSSGVDLCIDDFERIRQKVPVICDLKPSGKYVTVDLHKAGGIPQVMKLLLDAGLLHGDCLTIEGITIDESLKNIPSEPPANQNVISPITKPIYKKGHLAILKGNLATEGCVAKISGIRTPVLKGPAKVFESEEDCLDAILKEQIQEGDVIVIRNEGPVGGPGMREMLAPTSAIVGQGLGDKVALITDGRFSGGTYGLVVGHIAPEASVGGNIALVKEGDMITVDAHKKLIQLEVDEKELSKRRTLWEKPEVKYKTGILGKYARLVSSSSKGAVTDQP.

Cys47 contacts [2Fe-2S] cluster. Asp79 contributes to the Mg(2+) binding site. A [2Fe-2S] cluster-binding site is contributed by Cys120. 2 residues coordinate Mg(2+): Asp121 and Lys122. At Lys122 the chain carries N6-carboxylysine. [2Fe-2S] cluster is bound at residue Cys192. Residue Glu444 coordinates Mg(2+). Residue Ser470 is the Proton acceptor of the active site.

The protein belongs to the IlvD/Edd family. Homodimer. [2Fe-2S] cluster serves as cofactor. It depends on Mg(2+) as a cofactor.

The enzyme catalyses (2R)-2,3-dihydroxy-3-methylbutanoate = 3-methyl-2-oxobutanoate + H2O. The catalysed reaction is (2R,3R)-2,3-dihydroxy-3-methylpentanoate = (S)-3-methyl-2-oxopentanoate + H2O. It participates in amino-acid biosynthesis; L-isoleucine biosynthesis; L-isoleucine from 2-oxobutanoate: step 3/4. It functions in the pathway amino-acid biosynthesis; L-valine biosynthesis; L-valine from pyruvate: step 3/4. Functionally, functions in the biosynthesis of branched-chain amino acids. Catalyzes the dehydration of (2R,3R)-2,3-dihydroxy-3-methylpentanoate (2,3-dihydroxy-3-methylvalerate) into 2-oxo-3-methylpentanoate (2-oxo-3-methylvalerate) and of (2R)-2,3-dihydroxy-3-methylbutanoate (2,3-dihydroxyisovalerate) into 2-oxo-3-methylbutanoate (2-oxoisovalerate), the penultimate precursor to L-isoleucine and L-valine, respectively. This Prochlorococcus marinus (strain MIT 9211) protein is Dihydroxy-acid dehydratase.